The primary structure comprises 531 residues: Light-independent protochlorophyllide reductase subunit B (531 aa).

Residue D36 coordinates [4Fe-4S] cluster. The active-site Proton donor is the D291. Position 426–427 (426–427 (GL)) interacts with substrate.

It belongs to the ChlB/BchB/BchZ family. In terms of assembly, protochlorophyllide reductase is composed of three subunits; ChlL, ChlN and ChlB. Forms a heterotetramer of two ChlB and two ChlN subunits. [4Fe-4S] cluster is required as a cofactor.

It carries out the reaction chlorophyllide a + oxidized 2[4Fe-4S]-[ferredoxin] + 2 ADP + 2 phosphate = protochlorophyllide a + reduced 2[4Fe-4S]-[ferredoxin] + 2 ATP + 2 H2O. It participates in porphyrin-containing compound metabolism; chlorophyll biosynthesis (light-independent). Its function is as follows. Component of the dark-operative protochlorophyllide reductase (DPOR) that uses Mg-ATP and reduced ferredoxin to reduce ring D of protochlorophyllide (Pchlide) to form chlorophyllide a (Chlide). This reaction is light-independent. The NB-protein (ChlN-ChlB) is the catalytic component of the complex. The protein is Light-independent protochlorophyllide reductase subunit B of Prochlorococcus marinus (strain MIT 9211).